We begin with the raw amino-acid sequence, 478 residues long: F-box protein YDR306C (478 aa).

The span at 1–14 shows a compositional bias: basic residues; sequence MANKSRPKKIKAPY. Disordered stretches follow at residues 1-32 and 67-101; these read MANK…DNKA and RLSN…VIES. Low complexity predominate over residues 80 to 90; the sequence is QSPSSSSTSSS. Residues 91–101 are compositionally biased toward basic and acidic residues; the sequence is KGEKNGKVIES. An F-box domain is found at 112 to 173; the sequence is KMVLPWEIQH…CLPKLYYAPA (62 aa).

In terms of assembly, interacts with SKP1. Component of the probable SCF(YDR306C) complex containing CDC53, SKP1, RBX1 and YDR306C. Post-translationally, autoubiquitinated by the E3 ubiquitin ligase complex in conjunction with the E2 enzyme CDC34.

It participates in protein modification; protein ubiquitination. Functionally, substrate recognition component of a SCF (SKP1-CUL1-F-box protein) E3 ubiquitin-protein ligase complex which mediates the ubiquitination and subsequent proteasomal degradation of target proteins. Probably recognizes and binds to phosphorylated target proteins. The chain is F-box protein YDR306C from Saccharomyces cerevisiae (strain ATCC 204508 / S288c) (Baker's yeast).